The following is a 129-amino-acid chain: M-zodatoxin-Lt8l (129 aa).

Positions 1-20 (MKYFVVXXALVAAFACIAES) are cleaved as a signal peptide. Residues 21-60 (KPAESEHELAEVEEENELADLEDAVWLEDLADLSDLEETR) constitute a propeptide that is removed on maturation.

It belongs to the cationic peptide 06 (cytoinsectotoxin) family. In terms of tissue distribution, expressed by the venom gland.

The protein localises to the secreted. Functionally, insecticidal, cytolytic and antimicrobial peptide. Forms voltage-dependent, ion-permeable channels in membranes. At high concentration causes cell membrane lysis. The chain is M-zodatoxin-Lt8l (cit 1-12) from Lachesana tarabaevi (Spider).